A 128-amino-acid polypeptide reads, in one-letter code: S-protein homolog 5 (128 aa).

An N-terminal signal peptide occupies residues 1 to 20 (MEKVSIVCFFFFLLFGSGYG).

The protein belongs to the plant self-incompatibility (S1) protein family.

The protein localises to the secreted. The chain is S-protein homolog 5 from Arabidopsis thaliana (Mouse-ear cress).